We begin with the raw amino-acid sequence, 248 residues long: Pulmonary surfactant-associated protein A (248 aa).

A signal peptide spans 1 to 17; it reads MLLCSLTLMLLWMVASG. The Collagen-like domain maps to 28-100; the sequence is GSPGIPGTPG…PGERGPPGFP (73 aa). Residues 29 to 103 are disordered; that stretch reads SPGIPGTPGS…RGPPGFPAYL (75 aa). Over residues 42–51 the composition is skewed to basic and acidic residues; sequence PGRDGRDGIK. Residues 54-65 show a composition bias toward pro residues; the sequence is PGPPGPMGPPGG. Over residues 69–82 the composition is skewed to low complexity; it reads LPGRDGMTGAPGLP. The span at 84-93 shows a compositional bias: basic and acidic residues; that stretch reads ERGEKGEPGE. The C-type lectin domain maps to 127-247; the sequence is LQGSMLEVGE…CLQYRLAICE (121 aa). 2 cysteine pairs are disulfide-bonded: Cys155–Cys246 and Cys224–Cys238. Asn207 is a glycosylation site (N-linked (GlcNAc...) asparagine). Residues Glu215, Arg217, Asn234, and Asp235 each coordinate Ca(2+).

It belongs to the SFTPA family. In terms of assembly, oligomeric complex of 6 set of homotrimers.

Its subcellular location is the secreted. The protein resides in the extracellular space. It is found in the extracellular matrix. It localises to the surface film. In terms of biological role, in presence of calcium ions, it binds to surfactant phospholipids and contributes to lower the surface tension at the air-liquid interface in the alveoli of the mammalian lung and is essential for normal respiration. Enhances the expression of MYO18A/SP-R210 on alveolar macrophages. The protein is Pulmonary surfactant-associated protein A (SFTPA1) of Ovis aries (Sheep).